A 153-amino-acid polypeptide reads, in one-letter code: uncharacterized protein (153 aa).

The tract at residues E19 to R46 is disordered.

This is an uncharacterized protein from Homo sapiens (Human).